A 160-amino-acid polypeptide reads, in one-letter code: uncharacterized protein (160 aa).

It is found in the plastid. This is an uncharacterized protein from Euglena longa (Euglenophycean alga).